We begin with the raw amino-acid sequence, 364 residues long: UDP-N-acetylglucosamine--N-acetylmuramyl-(pentapeptide) pyrophosphoryl-undecaprenol N-acetylglucosamine transferase 1 (364 aa).

Residues 10 to 12 (TGG), Asn124, Ser195, Ile250, and Gln295 contribute to the UDP-N-acetyl-alpha-D-glucosamine site.

Belongs to the glycosyltransferase 28 family. MurG subfamily.

Its subcellular location is the cell membrane. The catalysed reaction is di-trans,octa-cis-undecaprenyl diphospho-N-acetyl-alpha-D-muramoyl-L-alanyl-D-glutamyl-meso-2,6-diaminopimeloyl-D-alanyl-D-alanine + UDP-N-acetyl-alpha-D-glucosamine = di-trans,octa-cis-undecaprenyl diphospho-[N-acetyl-alpha-D-glucosaminyl-(1-&gt;4)]-N-acetyl-alpha-D-muramoyl-L-alanyl-D-glutamyl-meso-2,6-diaminopimeloyl-D-alanyl-D-alanine + UDP + H(+). Its pathway is cell wall biogenesis; peptidoglycan biosynthesis. Functionally, cell wall formation. Catalyzes the transfer of a GlcNAc subunit on undecaprenyl-pyrophosphoryl-MurNAc-pentapeptide (lipid intermediate I) to form undecaprenyl-pyrophosphoryl-MurNAc-(pentapeptide)GlcNAc (lipid intermediate II). The chain is UDP-N-acetylglucosamine--N-acetylmuramyl-(pentapeptide) pyrophosphoryl-undecaprenol N-acetylglucosamine transferase 1 from Bacillus thuringiensis subsp. konkukian (strain 97-27).